The sequence spans 483 residues: Probable glycosyltransferase 4 (483 aa).

The Cytoplasmic segment spans residues 1–26 (MSKLQDRHGGEAAADVGRRARHQRLL). The helical; Signal-anchor for type II membrane protein transmembrane segment at 27 to 47 (LSFPVFPIVLLLLAPCTIFFF) threads the bilayer. At 48 to 483 (TSGDVPLPRI…KKTSRAARPM (436 aa)) the chain is on the lumenal side. The segment at 71–119 (AVAADTSPPPPSPPSSSPPPLSFPPPPPPPSSPPPPALPVVDDHSDTQR) is disordered. Pro residues predominate over residues 77-108 (SPPPPSPPSSSPPPLSFPPPPPPPSSPPPPAL). The N-linked (GlcNAc...) asparagine glycan is linked to N448.

This sequence belongs to the glycosyltransferase 34 family.

The protein resides in the golgi apparatus membrane. Its function is as follows. Probable glycosyltransferase that may be involved in the biosynthesis of xyloglucan. This Oryza sativa subsp. indica (Rice) protein is Probable glycosyltransferase 4.